We begin with the raw amino-acid sequence, 2272 residues long: Voltage-dependent R-type calcium channel subunit alpha-1E (2272 aa).

The segment at 1 to 40 is disordered; sequence MARFGEAVVVGRPGSGDGDSDQSRNRQGTPVPASGPAAAY. Topologically, residues 1-90 are cytoplasmic; sequence MARFGEAVVV…KYAKKLIDWP (90 aa). Phosphoserine is present on residues serine 15 and serine 20. The stretch at 77–355 is one I repeat; the sequence is NIVRKYAKKL…LVLGVLSGEF (279 aa). The chain crosses the membrane as a helical span at residues 91–109; it reads PFEYMILATIIANCIVLAL. Residues 110–128 are Extracellular-facing; the sequence is EQHLPEDDKTPMSRRLEKT. A helical membrane pass occupies residues 129–147; sequence EPYFIGIFCFEAGIKIVAL. The Cytoplasmic segment spans residues 148–159; that stretch reads GFIFHKGSYLRN. The chain crosses the membrane as a helical span at residues 160 to 174; that stretch reads GWNVMDFIVVLSGIL. Over 175 to 186 the chain is Extracellular; it reads ATAGTHFNTHVD. Residues 187–206 traverse the membrane as a helical segment; that stretch reads LRALRAVRVLRPLKLVSGIP. Residues 207 to 224 lie on the Cytoplasmic side of the membrane; that stretch reads SLQIVLKSIMKAMVPLLQ. Residues 225 to 245 form a helical membrane-spanning segment; sequence IGLLLFFAILMFAIIGLEFYS. Over 246-327 the chain is Extracellular; it reads GKLHRACFMN…NTNDALGATW (82 aa). Asparagine 255 carries N-linked (GlcNAc...) asparagine glycosylation. Residues 328–351 traverse the membrane as a helical segment; that stretch reads NWLYFIPLIIIGSFFVLNLVLGVL. Residues 352–477 lie on the Cytoplasmic side of the membrane; the sequence is SGEFAKERER…ISIRHMVKSQ (126 aa). Positions 375–392 are binding to the beta subunit; that stretch reads QQIERELNGYRAWIDKAE. Aspartate 427 is a binding site for Ca(2+). Serine 428 carries the post-translational modification Phosphoserine. Serine 429, glutamate 431, cysteine 433, and serine 438 together coordinate Ca(2+). At threonine 441 the chain carries Phosphothreonine. The stretch at 463-707 is one II repeat; it reads ERLLRISIRH…VFLAIAVDNL (245 aa). A helical membrane pass occupies residues 478-497; the sequence is VFYWIVLSVVALNTACVAIV. At 498–510 the chain is on the extracellular side; that stretch reads HHNQPQWLTHLLY. Residues 511-530 form a helical membrane-spanning segment; the sequence is YAEFLFLGLFLLEMSLKMYG. Residues 531 to 539 are Cytoplasmic-facing; it reads MGPRLYFHS. Residues 540 to 558 form a helical membrane-spanning segment; that stretch reads SFNCFDFGVTVGSIFEVVW. Topologically, residues 559 to 568 are extracellular; the sequence is AIFRPGTSFG. Residues 569-587 traverse the membrane as a helical segment; the sequence is ISVLRALRLLRIFKITKYW. At 588–606 the chain is on the cytoplasmic side; sequence ASLRNLVVSLMSSMKSIIS. Residues 607–626 traverse the membrane as a helical segment; it reads LLFLLFLFIVVFALLGMQLF. Residues 627 to 679 lie on the Extracellular side of the membrane; sequence GGRFNFNDGTPSANFDTFPAAIMTVFQILTGEDWNEVMYNGIRSQGGVSSGMW. The chain crosses the membrane as a helical span at residues 680–704; the sequence is SAIYFIVLTLFGNYTLLNVFLAIAV. Topologically, residues 705-1150 are cytoplasmic; it reads DNLANAQELT…TTNPIRRACH (446 aa). The disordered stretch occupies residues 730–777; that stretch reads LQKAKEVSPMSAPNMPSIERDRRRRHHMSMWEPRSSHLRERRRRHHMS. Serine 737, serine 746, serine 794, serine 816, and serine 856 each carry phosphoserine. Disordered stretches follow at residues 854–994 and 1091–1127; these read GGSL…VPRG and SNKT…RETG. Positions 914-927 are enriched in basic residues; the sequence is RHRQSQRRSRHRRV. The span at 934 to 946 shows a compositional bias: low complexity; it reads SASASRSRSASQE. Serine 948 carries the post-translational modification Phosphoserine. Basic and acidic residues-rich tracts occupy residues 956–985 and 1094–1105; these read EGEK…DLRR and TDGEASPLKEAE. A Phosphoserine modification is found at serine 1099. Residues 1143 to 1429 form an III repeat; it reads NPIRRACHYI…IFVALIIITF (287 aa). Residues 1151–1167 form a helical membrane-spanning segment; that stretch reads YIVNLRYFEMCILLVIA. Residues 1168-1191 lie on the Extracellular side of the membrane; it reads ASSIALAAEDPVLTNSERNKVLRY. Residues 1192–1211 traverse the membrane as a helical segment; it reads FDYVFTGVFTFEMVIKMIDQ. Over 1212–1219 the chain is Cytoplasmic; that stretch reads GLILQDGS. A helical transmembrane segment spans residues 1220-1242; it reads YFRDLWNILDFVVVVGALVAFAL. Residues 1243–1256 lie on the Extracellular side of the membrane; that stretch reads ANALGTNKGRDIKT. Residues 1257 to 1274 form a helical membrane-spanning segment; that stretch reads IKSLRVLRVLRPLKTIKR. The Cytoplasmic segment spans residues 1275–1293; sequence LPKLKAVFDCVVTSLKNVF. A helical transmembrane segment spans residues 1294-1313; it reads NILIVYKLFMFIFAVIAVQL. Residues 1314–1400 are Extracellular-facing; sequence FKGKFFYCTD…DRGPSRSNRM (87 aa). A helical transmembrane segment spans residues 1401–1424; that stretch reads EMSIFYVVYFVVFPFFFVNIFVAL. The Cytoplasmic segment spans residues 1425–1481; sequence IIITFQEQGDKMMEECSLEKNERACIDFAISAKPLTRYMPQNRHTFQYRVWHFVVSP. One copy of the IV repeat lies at 1466–1729; it reads NRHTFQYRVW…LFVAVIMDNF (264 aa). A helical membrane pass occupies residues 1482–1500; sequence SFEYTIMAMIALNTVVLMM. Over 1501-1515 the chain is Extracellular; the sequence is KYYTAPCTYELALKY. Residues 1516–1535 form a helical membrane-spanning segment; sequence LNIAFTMVFSLECVLKVIAF. The Cytoplasmic segment spans residues 1536–1543; it reads GFLNYFRD. The chain crosses the membrane as a helical span at residues 1544 to 1562; sequence TWNIFDFITVIGSITEIIL. The Extracellular portion of the chain corresponds to 1563-1573; it reads TDSKLVNTSGF. N-linked (GlcNAc...) asparagine glycosylation is present at asparagine 1569. A helical transmembrane segment spans residues 1574 to 1592; sequence NMSFLKLFRAARLIKLLRQ. Over 1593 to 1611 the chain is Cytoplasmic; it reads GYTIRILLWTFVQSFKALP. Residues 1612–1631 form a helical membrane-spanning segment; sequence YVCLLIAMLFFIYAIIGMQV. Residues 1632–1700 lie on the Extracellular side of the membrane; that stretch reads FGNIKLDEES…QNESERCGTD (69 aa). Asparagine 1692 carries N-linked (GlcNAc...) asparagine glycosylation. Residues 1701–1726 traverse the membrane as a helical segment; sequence LAYVYFVSFIFFCSFLMLNLFVAVIM. The Cytoplasmic segment spans residues 1727-2272; sequence DNFEYLTRDS…LSDTEEDDKC (546 aa). Residues 1742–1777 form the EF-hand domain; that stretch reads HHLDEFVRVWAEYDRAACGRIHYTEMYEMLTLMSPP. The Ca(2+) site is built by aspartate 1755, arginine 1761, and glutamate 1766. The segment at 2021–2186 is disordered; that stretch reads SAHRLNSDSG…QQGQHPSPQH (166 aa). A compositionally biased stretch (basic and acidic residues) spans 2025–2045; the sequence is LNSDSGHKSDTHRSGGRERGR. Phosphoserine occurs at positions 2054 and 2073. Positions 2061–2078 are enriched in basic and acidic residues; the sequence is NSEERGTQADWESPERRQ. The span at 2097 to 2112 shows a compositional bias: low complexity; the sequence is SLSESSIPSISDTSTP. Positions 2155-2174 are enriched in polar residues; that stretch reads LASQALESNSACLTESSNSL. Low complexity predominate over residues 2175-2186; the sequence is HPQQGQHPSPQH.

It belongs to the calcium channel alpha-1 subunit (TC 1.A.1.11) family. CACNA1E subfamily. Interacts with EFHC1. Voltage-dependent calcium channels are multisubunit complexes, consisting of alpha-1, alpha-2, beta and delta subunits in a 1:1:1:1 ratio. The channel activity is directed by the pore-forming and voltage-sensitive alpha-1 subunit. In many cases, this subunit is sufficient to generate voltage-sensitive calcium channel activity. The auxiliary subunits beta and alpha-2/delta linked by a disulfide bridge regulate the channel activity. As to expression, expressed in neuronal tissues, retina, spleen, and pancreatic islet cells.

Its subcellular location is the membrane. The enzyme catalyses Ca(2+)(in) = Ca(2+)(out). Its function is as follows. Voltage-sensitive calcium channels (VSCC) mediate the entry of calcium ions into excitable cells and are also involved in a variety of calcium-dependent processes, including muscle contraction, hormone or neurotransmitter release, gene expression, cell motility, cell division and cell death. The isoform alpha-1E gives rise to R-type calcium currents. R-type calcium channels belong to the 'high-voltage activated' (HVA) group and are blocked by nickel. They are however insensitive to dihydropyridines (DHP). Calcium channels containing alpha-1E subunit could be involved in the modulation of firing patterns of neurons which is important for information processing. This Mus musculus (Mouse) protein is Voltage-dependent R-type calcium channel subunit alpha-1E (Cacna1e).